The chain runs to 185 residues: Elongation factor P (185 aa).

The protein belongs to the elongation factor P family.

Its subcellular location is the cytoplasm. It participates in protein biosynthesis; polypeptide chain elongation. In terms of biological role, involved in peptide bond synthesis. Stimulates efficient translation and peptide-bond synthesis on native or reconstituted 70S ribosomes in vitro. Probably functions indirectly by altering the affinity of the ribosome for aminoacyl-tRNA, thus increasing their reactivity as acceptors for peptidyl transferase. In Geobacillus kaustophilus (strain HTA426), this protein is Elongation factor P.